The following is a 316-amino-acid chain: RNA interference defective protein 11 (316 aa).

An RING-type; degenerate zinc finger spans residues 183–218; it reads CYINFNCQTSKVMFGCGHVYCEQCLNSWNDKPCSVC.

As to quaternary structure, interacts (via RING-type zinc finger domain) with rde-10.

In complex with rde-10, required in the endogenous and exogenous siRNA pathway for biogenesis and accumulation of secondary small interfering RNA (siRNA) intermediates, such as 22G-siRNAs derived from ergo-1 targets. This Caenorhabditis elegans protein is RNA interference defective protein 11.